The chain runs to 552 residues: Kumamolisin (552 aa).

A compositionally biased stretch (basic and acidic residues) spans 1–17 (MSDMEKPWKEEEKREVL). The disordered stretch occupies residues 1–34 (MSDMEKPWKEEEKREVLAGHARRQAPQAVDKGPV). The Peptidase S53 domain maps to 193-546 (AYTPLDVAQA…IRLLQALLPS (354 aa)). Catalysis depends on charge relay system residues glutamate 266, aspartate 270, and serine 466. Residues aspartate 504, isoleucine 505, glycine 522, glycine 524, and aspartate 526 each contribute to the Ca(2+) site.

Forms monomeric and dimeric crystals. It depends on Ca(2+) as a cofactor. Post-translationally, autocatalytically processed.

Its subcellular location is the secreted. The enzyme catalyses The enzyme preferentially hydrolyzes peptides having an Ala or Pro residue at P2 position and prefers such charged amino acid residues as Glu or Arg at the P2' position. In the oxidized insulin B chain, kumamolysin preferentially cleaves between Leu(15) and Tyr(16).. With respect to regulation, inactivated at 22.4 and 37 degrees Celsius, but not at 60 degrees Celsius, by aldehyde-type inhibitors such as acetyl-Ile-Ala-Phe-CHO and acetyl-Ile-Pro-Phe-CHO. Insensitive to the known carboxyl proteinase inhibitors pepstatin, diazoacetyl-DL-norleucine methyl ester (DAN) and 1,2-epoxy-3-(p-nitrophenoxy)propane (EPNP). Not inhibited by Ala-Ala-Phe-chloromethylketone, an inhibitor of the human tripeptidyl-peptidase 1. Thermostable pepstatin-insensitive serine-carboxyl proteinase. Preferentially hydrolyzes synthetic peptides having an Ala or Pro residue at the P2 position and charged amino acids such as Glu or Arg at the P2' position. In vitro, specifically hydrolyzes the Leu-15-Tyr-16 peptide bond in oxidized insulin B-chain. Additional cleavage of oxidized insulin B-chain at Phe-25-Tyr-26 is detected at a considerably lower rate. Can hydrolyze collagen and the chromogenic substrate azocoll. Shows lower activity with albumin and casein. Shows very weak tripeptidyl peptidase activity. The polypeptide is Kumamolisin (Bacillus sp. (strain MN-32)).